Here is an 82-residue protein sequence, read N- to C-terminus: uncharacterized protein (82 aa).

This is an uncharacterized protein from Ictaluridae (bullhead catfishes).